Consider the following 959-residue polypeptide: ATP-dependent 6-phosphofructokinase subunit beta (959 aa).

An N-terminal catalytic PFK domain 1 region spans residues 2-573 (TVTTPFVNGT…HLNNFMAINS (572 aa)). Positions 144–167 (KNAVSTKPTPPPAPEASAESGLSS) are disordered. The residue at position 152 (T152) is a Phosphothreonine. A compositionally biased stretch (low complexity) spans 158–167 (EASAESGLSS). 2 positions are modified to phosphoserine: S163 and S171. Residues G206, 270–271 (RC), and 300–303 (GDGS) each bind ATP. A Mg(2+)-binding site is contributed by D301. Beta-D-fructose 6-phosphate-binding positions include 346–348 (SID), R383, 390–392 (MGR), E447, R475, and 481–484 (HVQR). D348 acts as the Proton acceptor in catalysis. The tract at residues 574–587 (ADHNEPKLPKDKRL) is interdomain linker. Residues 588-959 (KIAIVNVGAP…DHLVGRKRVD (372 aa)) are C-terminal regulatory PFK domain 2. Beta-D-fructose 2,6-bisphosphate-binding positions include R658, 716–720 (TLSNN), R754, and 761–763 (QGG). At S803 the chain carries Phosphoserine. Residues K847, 853 to 856 (HVQQ), and R935 each bind beta-D-fructose 2,6-bisphosphate.

This sequence belongs to the phosphofructokinase type A (PFKA) family. ATP-dependent PFK group I subfamily. Eukaryotic two domain clade 'E' sub-subfamily. As to quaternary structure, heterooctamer of 4 alpha and 4 beta chains. Mg(2+) is required as a cofactor.

The protein localises to the cytoplasm. It localises to the mitochondrion outer membrane. It catalyses the reaction beta-D-fructose 6-phosphate + ATP = beta-D-fructose 1,6-bisphosphate + ADP + H(+). The protein operates within carbohydrate degradation; glycolysis; D-glyceraldehyde 3-phosphate and glycerone phosphate from D-glucose: step 3/4. Allosterically activated by ADP, AMP, or fructose 2,6-bisphosphate, and allosterically inhibited by ATP or citrate. Functionally, catalyzes the phosphorylation of D-fructose 6-phosphate to fructose 1,6-bisphosphate by ATP, the first committing step of glycolysis. This chain is ATP-dependent 6-phosphofructokinase subunit beta (PFK2), found in Saccharomyces cerevisiae (strain ATCC 204508 / S288c) (Baker's yeast).